Consider the following 354-residue polypeptide: UDP-N-acetylglucosamine--N-acetylmuramyl-(pentapeptide) pyrophosphoryl-undecaprenol N-acetylglucosamine transferase (354 aa).

UDP-N-acetyl-alpha-D-glucosamine contacts are provided by residues T12–G14, N124, R163, S187, I240, and Q285.

The protein belongs to the glycosyltransferase 28 family. MurG subfamily.

The protein localises to the cell inner membrane. It catalyses the reaction di-trans,octa-cis-undecaprenyl diphospho-N-acetyl-alpha-D-muramoyl-L-alanyl-D-glutamyl-meso-2,6-diaminopimeloyl-D-alanyl-D-alanine + UDP-N-acetyl-alpha-D-glucosamine = di-trans,octa-cis-undecaprenyl diphospho-[N-acetyl-alpha-D-glucosaminyl-(1-&gt;4)]-N-acetyl-alpha-D-muramoyl-L-alanyl-D-glutamyl-meso-2,6-diaminopimeloyl-D-alanyl-D-alanine + UDP + H(+). The protein operates within cell wall biogenesis; peptidoglycan biosynthesis. In terms of biological role, cell wall formation. Catalyzes the transfer of a GlcNAc subunit on undecaprenyl-pyrophosphoryl-MurNAc-pentapeptide (lipid intermediate I) to form undecaprenyl-pyrophosphoryl-MurNAc-(pentapeptide)GlcNAc (lipid intermediate II). This is UDP-N-acetylglucosamine--N-acetylmuramyl-(pentapeptide) pyrophosphoryl-undecaprenol N-acetylglucosamine transferase from Methylococcus capsulatus (strain ATCC 33009 / NCIMB 11132 / Bath).